The sequence spans 258 residues: Thiazole synthase (258 aa).

Lysine 100 acts as the Schiff-base intermediate with DXP in catalysis. 1-deoxy-D-xylulose 5-phosphate contacts are provided by residues glycine 161, 187 to 188, and 209 to 210; these read AG and NT.

Belongs to the ThiG family. Homotetramer. Forms heterodimers with either ThiH or ThiS.

It localises to the cytoplasm. It carries out the reaction [ThiS sulfur-carrier protein]-C-terminal-Gly-aminoethanethioate + 2-iminoacetate + 1-deoxy-D-xylulose 5-phosphate = [ThiS sulfur-carrier protein]-C-terminal Gly-Gly + 2-[(2R,5Z)-2-carboxy-4-methylthiazol-5(2H)-ylidene]ethyl phosphate + 2 H2O + H(+). The protein operates within cofactor biosynthesis; thiamine diphosphate biosynthesis. Catalyzes the rearrangement of 1-deoxy-D-xylulose 5-phosphate (DXP) to produce the thiazole phosphate moiety of thiamine. Sulfur is provided by the thiocarboxylate moiety of the carrier protein ThiS. In vitro, sulfur can be provided by H(2)S. The sequence is that of Thiazole synthase from Campylobacter jejuni subsp. jejuni serotype O:6 (strain 81116 / NCTC 11828).